We begin with the raw amino-acid sequence, 227 residues long: Cytochrome c oxidase subunit 2 (227 aa).

The Mitochondrial intermembrane segment spans residues 1-14 (MAHPLQLGLQDASS). A helical membrane pass occupies residues 15-45 (PIMEELLYFHDHALMIVFLISSLVLYTISLM). Topologically, residues 46 to 59 (LTTKLMHTSTMNAQ) are mitochondrial matrix. The helical transmembrane segment at 60 to 87 (MVETMWTILPAVILTSIALPSLRILYMT) threads the bilayer. The Mitochondrial intermembrane portion of the chain corresponds to 88–227 (DEINNPLLTI…HFETWSTLTS (140 aa)). Positions 161, 196, 198, 200, 204, and 207 each coordinate Cu cation. Mg(2+) is bound at residue E198.

The protein belongs to the cytochrome c oxidase subunit 2 family. As to quaternary structure, component of the cytochrome c oxidase (complex IV, CIV), a multisubunit enzyme composed of 14 subunits. The complex is composed of a catalytic core of 3 subunits MT-CO1, MT-CO2 and MT-CO3, encoded in the mitochondrial DNA, and 11 supernumerary subunits COX4I, COX5A, COX5B, COX6A, COX6B, COX6C, COX7A, COX7B, COX7C, COX8 and NDUFA4, which are encoded in the nuclear genome. The complex exists as a monomer or a dimer and forms supercomplexes (SCs) in the inner mitochondrial membrane with NADH-ubiquinone oxidoreductase (complex I, CI) and ubiquinol-cytochrome c oxidoreductase (cytochrome b-c1 complex, complex III, CIII), resulting in different assemblies (supercomplex SCI(1)III(2)IV(1) and megacomplex MCI(2)III(2)IV(2)). Found in a complex with TMEM177, COA6, COX18, COX20, SCO1 and SCO2. Interacts with TMEM177 in a COX20-dependent manner. Interacts with COX20. Interacts with COX16. Requires Cu cation as cofactor.

The protein resides in the mitochondrion inner membrane. It catalyses the reaction 4 Fe(II)-[cytochrome c] + O2 + 8 H(+)(in) = 4 Fe(III)-[cytochrome c] + 2 H2O + 4 H(+)(out). Its function is as follows. Component of the cytochrome c oxidase, the last enzyme in the mitochondrial electron transport chain which drives oxidative phosphorylation. The respiratory chain contains 3 multisubunit complexes succinate dehydrogenase (complex II, CII), ubiquinol-cytochrome c oxidoreductase (cytochrome b-c1 complex, complex III, CIII) and cytochrome c oxidase (complex IV, CIV), that cooperate to transfer electrons derived from NADH and succinate to molecular oxygen, creating an electrochemical gradient over the inner membrane that drives transmembrane transport and the ATP synthase. Cytochrome c oxidase is the component of the respiratory chain that catalyzes the reduction of oxygen to water. Electrons originating from reduced cytochrome c in the intermembrane space (IMS) are transferred via the dinuclear copper A center (CU(A)) of subunit 2 and heme A of subunit 1 to the active site in subunit 1, a binuclear center (BNC) formed by heme A3 and copper B (CU(B)). The BNC reduces molecular oxygen to 2 water molecules using 4 electrons from cytochrome c in the IMS and 4 protons from the mitochondrial matrix. This Galeopterus variegatus (Malayan flying lemur) protein is Cytochrome c oxidase subunit 2 (MT-CO2).